Reading from the N-terminus, the 361-residue chain is D-alanine--D-alanine ligase (361 aa).

The ATP-grasp domain occupies lysine 144–arginine 350. Valine 177–glutamate 232 lines the ATP pocket. Mg(2+) contacts are provided by aspartate 303, glutamate 317, and asparagine 319.

The protein belongs to the D-alanine--D-alanine ligase family. The cofactor is Mg(2+). It depends on Mn(2+) as a cofactor.

It is found in the cytoplasm. The catalysed reaction is 2 D-alanine + ATP = D-alanyl-D-alanine + ADP + phosphate + H(+). It functions in the pathway cell wall biogenesis; peptidoglycan biosynthesis. Its function is as follows. Cell wall formation. The sequence is that of D-alanine--D-alanine ligase from Chlorobium luteolum (strain DSM 273 / BCRC 81028 / 2530) (Pelodictyon luteolum).